A 462-amino-acid polypeptide reads, in one-letter code: Sonic hedgehog protein (462 aa).

The N-terminal stretch at 1–23 is a signal peptide; it reads MLLLARCLLLVLVSSLLVCSGLA. Residue Cys24 is the site of N-palmitoyl cysteine attachment. The Cardin-Weintraub signature appears at 32–38; sequence KRRHPKK. Residues Glu89, Glu90, Asp95, Thr125, Glu126, Asp129, and Asp131 each coordinate Ca(2+). Zn(2+) is bound by residues His140, Asp147, and His182. A lipid anchor (Cholesterol glycine ester) is attached at Gly197. Asn278 carries an N-linked (GlcNAc...) asparagine glycan. 2 disordered regions span residues 279 to 302 and 395 to 414; these read DSAT…LGPR and TDRG…GRVA. The segment covering 283 to 292 has biased composition (low complexity); the sequence is GEPEASSGSG. Over residues 400–412 the composition is skewed to gly residues; it reads DSGGGDRGGGGGR.

The protein belongs to the hedgehog family. Multimer. In terms of assembly, interacts with HHATL/GUP1 which negatively regulates HHAT-mediated palmitoylation of the SHH N-terminus. Interacts with BOC and CDON. Interacts with HHIP. Interacts with DISP1 via its cholesterol anchor. Interacts with SCUBE2. Interacts with glypican GPC3. In terms of processing, the C-terminal domain displays an autoproteolysis activity and a cholesterol transferase activity. Both activities result in the cleavage of the full-length protein and covalent attachment of a cholesterol moiety to the C-terminal of the newly generated N-terminal fragment (ShhN). Cholesterylation is required for the sonic hedgehog protein N-product targeting to lipid rafts and multimerization. ShhN is the active species in both local and long-range signaling, whereas the C-product (ShhC) is degraded in the endoplasmic reticulum. Post-translationally, N-palmitoylation by HHAT of ShhN is required for sonic hedgehog protein N-product multimerization and full activity. It is a prerequisite for the membrane-proximal positioning and the subsequent shedding of this N-terminal peptide. The lipidated N- and C-terminal peptides of ShhNp can be cleaved (shedding). The N-terminal palmitoylated peptide is cleaved at the Cardin-Weintraub (CW) motif site. The cleavage reduced the interactions with heparan sulfate. The cleavage is enhanced by SCUBE2.

The protein localises to the endoplasmic reticulum membrane. The protein resides in the golgi apparatus membrane. Its subcellular location is the secreted. It localises to the cell membrane. The catalysed reaction is glycyl-L-cysteinyl-[protein] + cholesterol + H(+) = [protein]-C-terminal glycyl cholesterol ester + N-terminal L-cysteinyl-[protein]. In terms of biological role, the C-terminal part of the sonic hedgehog protein precursor displays an autoproteolysis and a cholesterol transferase activity. Both activities result in the cleavage of the full-length protein into two parts (ShhN and ShhC) followed by the covalent attachment of a cholesterol moiety to the C-terminal of the newly generated ShhN. Both activities occur in the endoplasmic reticulum. Once cleaved, ShhC is degraded in the endoplasmic reticulum. The dually lipidated sonic hedgehog protein N-product (ShhNp) is a morphogen which is essential for a variety of patterning events during development. Induces ventral cell fate in the neural tube and somites. Involved in the patterning of the anterior-posterior axis of the developing limb bud. Essential for axon guidance. Binds to the patched (PTCH1) receptor, which functions in association with smoothened (SMO), to activate the transcription of target genes. In the absence of SHH, PTCH1 represses the constitutive signaling activity of SMO. The protein is Sonic hedgehog protein of Homo sapiens (Human).